The chain runs to 31 residues: Mycofactocin precursor peptide (31 aa).

Belongs to the mycofactocin precursor peptide family. The post-translational modifications that lead to mycofactocin involve oxidative decarboxylation of the C-terminal tyrosine residue catalyzed by MftC, introduction of a tyramine-valine cross-link, removal of the modified C-terminal dipeptide by MftE. The released dipeptide then undergoes oxidative deamination by MftD, glycosylation by MftF and methylation by an unknown enzyme.

In terms of biological role, precursor peptide that leads to mycofactocin (MFT) after extensive post-translational modifications by enzymes encoded by adjacent genes. Mycofactocin acts as a redox cofactor of nicotinamide-dependent oxidoreductases encoded in the same locus. Is required for the in vivo ethanol assimilation in M.smegmatis. This is Mycofactocin precursor peptide from Mycolicibacterium smegmatis (strain ATCC 700084 / mc(2)155) (Mycobacterium smegmatis).